A 507-amino-acid chain; its full sequence is Histidine--tRNA ligase (507 aa).

It belongs to the class-II aminoacyl-tRNA synthetase family. As to quaternary structure, homodimer.

Its subcellular location is the cytoplasm. The enzyme catalyses tRNA(His) + L-histidine + ATP = L-histidyl-tRNA(His) + AMP + diphosphate + H(+). The protein is Histidine--tRNA ligase of Rhizobium leguminosarum bv. trifolii (strain WSM2304).